We begin with the raw amino-acid sequence, 209 residues long: Uracil phosphoribosyltransferase (209 aa).

5-phospho-alpha-D-ribose 1-diphosphate is bound by residues Arg79, Arg104, and 131 to 139; that span reads DPMLATGGS. Uracil is bound by residues Val194 and 199 to 201; that span reads GDA. 5-phospho-alpha-D-ribose 1-diphosphate is bound at residue Asp200.

The protein belongs to the UPRTase family. It depends on Mg(2+) as a cofactor.

The catalysed reaction is UMP + diphosphate = 5-phospho-alpha-D-ribose 1-diphosphate + uracil. It functions in the pathway pyrimidine metabolism; UMP biosynthesis via salvage pathway; UMP from uracil: step 1/1. Its activity is regulated as follows. Allosterically activated by GTP. Its function is as follows. Catalyzes the conversion of uracil and 5-phospho-alpha-D-ribose 1-diphosphate (PRPP) to UMP and diphosphate. This is Uracil phosphoribosyltransferase from Clostridium botulinum (strain ATCC 19397 / Type A).